The primary structure comprises 229 residues: Cytochrome c oxidase subunit 2 (229 aa).

Topologically, residues 1 to 14 (MAQQAQLGLQDAAS) are mitochondrial intermembrane. The helical transmembrane segment at 15–45 (PIMEELIHFHDHTLTVVFLISVLIFYLIIVM) threads the bilayer. The Mitochondrial matrix portion of the chain corresponds to 46 to 59 (VTTTFMNKHSLDSQ). Residues 60 to 87 (EVEIVWTVMPAIVLITIALPSLRILYLT) form a helical membrane-spanning segment. The Mitochondrial intermembrane segment spans residues 88–229 (DEISNPHLTI…ENWTTKVLAS (142 aa)). 6 residues coordinate Cu cation: His161, Cys196, Glu198, Cys200, His204, and Met207. Position 198 (Glu198) interacts with Mg(2+).

It belongs to the cytochrome c oxidase subunit 2 family. In terms of assembly, component of the cytochrome c oxidase (complex IV, CIV), a multisubunit enzyme composed of 14 subunits. The complex is composed of a catalytic core of 3 subunits MT-CO1, MT-CO2 and MT-CO3, encoded in the mitochondrial DNA, and 11 supernumerary subunits COX4I, COX5A, COX5B, COX6A, COX6B, COX6C, COX7A, COX7B, COX7C, COX8 and NDUFA4, which are encoded in the nuclear genome. The complex exists as a monomer or a dimer and forms supercomplexes (SCs) in the inner mitochondrial membrane with NADH-ubiquinone oxidoreductase (complex I, CI) and ubiquinol-cytochrome c oxidoreductase (cytochrome b-c1 complex, complex III, CIII), resulting in different assemblies (supercomplex SCI(1)III(2)IV(1) and megacomplex MCI(2)III(2)IV(2)). Found in a complex with TMEM177, COA6, COX18, COX20, SCO1 and SCO2. Interacts with TMEM177 in a COX20-dependent manner. Interacts with COX20. Interacts with COX16. It depends on Cu cation as a cofactor.

The protein localises to the mitochondrion inner membrane. It catalyses the reaction 4 Fe(II)-[cytochrome c] + O2 + 8 H(+)(in) = 4 Fe(III)-[cytochrome c] + 2 H2O + 4 H(+)(out). Its function is as follows. Component of the cytochrome c oxidase, the last enzyme in the mitochondrial electron transport chain which drives oxidative phosphorylation. The respiratory chain contains 3 multisubunit complexes succinate dehydrogenase (complex II, CII), ubiquinol-cytochrome c oxidoreductase (cytochrome b-c1 complex, complex III, CIII) and cytochrome c oxidase (complex IV, CIV), that cooperate to transfer electrons derived from NADH and succinate to molecular oxygen, creating an electrochemical gradient over the inner membrane that drives transmembrane transport and the ATP synthase. Cytochrome c oxidase is the component of the respiratory chain that catalyzes the reduction of oxygen to water. Electrons originating from reduced cytochrome c in the intermembrane space (IMS) are transferred via the dinuclear copper A center (CU(A)) of subunit 2 and heme A of subunit 1 to the active site in subunit 1, a binuclear center (BNC) formed by heme A3 and copper B (CU(B)). The BNC reduces molecular oxygen to 2 water molecules using 4 electrons from cytochrome c in the IMS and 4 protons from the mitochondrial matrix. This is Cytochrome c oxidase subunit 2 (MT-CO2) from Petromyzon marinus (Sea lamprey).